A 456-amino-acid polypeptide reads, in one-letter code: tRNA modification GTPase MnmE (456 aa).

Arginine 21, glutamate 85, and lysine 124 together coordinate (6S)-5-formyl-5,6,7,8-tetrahydrofolate. Residues glutamine 220–glycine 379 enclose the TrmE-type G domain. K(+) is bound at residue asparagine 230. GTP contacts are provided by residues asparagine 230 to serine 235, serine 249 to threonine 255, and aspartate 274 to glycine 277. Serine 234 lines the Mg(2+) pocket. Serine 249, isoleucine 251, and threonine 254 together coordinate K(+). Threonine 255 lines the Mg(2+) pocket. Lysine 456 serves as a coordination point for (6S)-5-formyl-5,6,7,8-tetrahydrofolate.

Belongs to the TRAFAC class TrmE-Era-EngA-EngB-Septin-like GTPase superfamily. TrmE GTPase family. As to quaternary structure, homodimer. Heterotetramer of two MnmE and two MnmG subunits. It depends on K(+) as a cofactor.

Its subcellular location is the cytoplasm. In terms of biological role, exhibits a very high intrinsic GTPase hydrolysis rate. Involved in the addition of a carboxymethylaminomethyl (cmnm) group at the wobble position (U34) of certain tRNAs, forming tRNA-cmnm(5)s(2)U34. In Leptospira interrogans serogroup Icterohaemorrhagiae serovar copenhageni (strain Fiocruz L1-130), this protein is tRNA modification GTPase MnmE.